An 837-amino-acid polypeptide reads, in one-letter code: Translation initiation factor IF-2 (837 aa).

Over residues Ala-97–Glu-139 the composition is skewed to basic and acidic residues. Positions Ala-97–Pro-253 are disordered. Low complexity predominate over residues Ala-140–Ala-175. Residues Pro-176–Arg-197 show a composition bias toward basic and acidic residues. A compositionally biased stretch (basic residues) spans Asp-198 to Leu-208. A compositionally biased stretch (basic and acidic residues) spans Arg-219–Arg-229. Positions Arg-230–Gln-244 are enriched in basic residues. The tr-type G domain occupies Ala-337–Glu-504. Residues Gly-346–Thr-353 are G1. Gly-346–Thr-353 lines the GTP pocket. Residues Gly-371–His-375 are G2. Residues Asp-392–Gly-395 are G3. Residues Asp-392–His-396 and Asn-446–Asp-449 each bind GTP. Residues Asn-446–Asp-449 form a G4 region. The segment at Ser-482–Lys-484 is G5.

It belongs to the TRAFAC class translation factor GTPase superfamily. Classic translation factor GTPase family. IF-2 subfamily.

It localises to the cytoplasm. Its function is as follows. One of the essential components for the initiation of protein synthesis. Protects formylmethionyl-tRNA from spontaneous hydrolysis and promotes its binding to the 30S ribosomal subunits. Also involved in the hydrolysis of GTP during the formation of the 70S ribosomal complex. The sequence is that of Translation initiation factor IF-2 from Stutzerimonas stutzeri (strain A1501) (Pseudomonas stutzeri).